A 404-amino-acid chain; its full sequence is Magnesium transporter NIPA4 (404 aa).

The Extracellular segment spans residues 1–55 (MELRVSNTSCENGSLLHLYCSSQEVLCQIVNDLSPEVPSNATFHSWQERIRQNYG). 3 N-linked (GlcNAc...) asparagine glycosylation sites follow: Asn7, Asn12, and Asn40. A helical transmembrane segment spans residues 56 to 76 (FYIGLGLAFLSSFLIGSSVIL). The Cytoplasmic portion of the chain corresponds to 77–102 (KKKGLLRLVATGATRAVDGGFGYLKD). Residues 103–123 (AMWWAGFLTMAAGEVANFGAY) form a helical membrane-spanning segment. Position 124 (Ala124) is a topological domain, extracellular. Residues 125 to 145 (FAPATVVTPLGALSVLISAIL) traverse the membrane as a helical segment. Residues 146-153 (SSYFLRES) are Cytoplasmic-facing. The chain crosses the membrane as a helical span at residues 154-174 (LNLLGKLGCVICVAGSTVMVI). At 175-195 (HAPEEEKVTTIMEMASKMKDT) the chain is on the extracellular side. A helical membrane pass occupies residues 196–216 (GFIVFAVLLLVSCLILIFVIA). Over 217–223 (PRYGQRN) the chain is Cytoplasmic. A helical membrane pass occupies residues 224–244 (ILIYIIICSVIGAFSVAAVKG). Residues 245-261 (LGITIKNFFQGLPVVRH) are Extracellular-facing. A helical membrane pass occupies residues 262–282 (PLPYILSLILALSLSTQVNFL). Residues 283 to 293 (NRALDIFNTSL) lie on the Cytoplasmic side of the membrane. Residues 294 to 314 (VFPIYYVFFTTVVVTSSIILF) traverse the membrane as a helical segment. Residues 315–324 (KEWYSMSAVD) are Extracellular-facing. Residues 325–345 (IAGTLSGFVTIILGVFMLHAF) traverse the membrane as a helical segment. The Cytoplasmic segment spans residues 346 to 404 (KDLDISCASLPHMHKNPPPSPAPEPTVIRLEDKNVLVDNIELASTSSPEEKPKVFIIHS).

Belongs to the NIPA family. Highly expressed in brain, lung, stomach, keratinocytes and leukocytes, and in all other tissues tested except liver, thyroid and fetal brain.

It localises to the cell membrane. The catalysed reaction is Mg(2+)(in) = Mg(2+)(out). Its function is as follows. Acts as a Mg(2+) transporter. Can also transport other divalent cations such as Ba(2+), Sr(2+) and Fe(2+) but to a much less extent than Mg(2+). May be a receptor for ligands (trioxilins A3 and B3) from the hepoxilin pathway. This Homo sapiens (Human) protein is Magnesium transporter NIPA4 (NIPAL4).